Here is a 181-residue protein sequence, read N- to C-terminus: Protein csk22 (181 aa).

The next 5 helical transmembrane spans lie at 5–22 (LQSV…YKKI), 35–57 (WLFT…SAIH), 61–78 (YGYL…VFFA), 91–113 (IYFR…RFLY), and 140–162 (LTIG…IIKL).

Its subcellular location is the cell membrane. The protein is Protein csk22 (csk22) of Bacillus subtilis (strain 168).